A 128-amino-acid polypeptide reads, in one-letter code: Disintegrin lebein-2-alpha (128 aa).

The signal sequence occupies residues 1–20 (MIQVLLVTICLAVFPFHGSS). The propeptide occupies 21–46 (IILESGNVNDYEVVYPKKVTLLPTGA). Positions 47–111 (MNSANPCCDP…SDCPRNPWKS (65 aa)) constitute a Disintegrin domain. Disulfide bonds link C53–C76, C67–C73, C72–C97, and C85–C104. A Cell attachment site; atypical (MLD) motif is present at residues 89 to 91 (MLD). Positions 112–128 (EEDEMKWSATAKGSVLM) are excised as a propeptide.

The protein belongs to the disintegrin family. Dimeric disintegrin subfamily. As to quaternary structure, heterodimer with subunit beta; disulfide-linked. Expressed by the venom gland.

Its subcellular location is the secreted. Functionally, inhibits ADP-induced human platelet aggregation. Antagonist of alpha-IIb/beta-3 (ITGA2B/ITGB3). Also avidly binds to the laminin-binding beta-1 integrins (alpha-3/beta-1 (ITGA3/ITGB1), alpha-6/beta-1 (ITGA6/ITGB1), and alpha-7/beta-1 (ITGA7/ITGB1)) in an RGD-independent manner. The chain is Disintegrin lebein-2-alpha from Macrovipera lebetinus (Levantine viper).